Here is a 235-residue protein sequence, read N- to C-terminus: Elongation factor Tu, chloroplastic (235 aa).

Residues 1 to 125 (KNMITGAAQM…AVDEYIPTPV (125 aa)) form the tr-type G domain. 47-50 (NKQD) provides a ligand contact to GTP.

It belongs to the TRAFAC class translation factor GTPase superfamily. Classic translation factor GTPase family. EF-Tu/EF-1A subfamily.

The protein resides in the plastid. The protein localises to the chloroplast. It catalyses the reaction GTP + H2O = GDP + phosphate + H(+). Functionally, GTP hydrolase that promotes the GTP-dependent binding of aminoacyl-tRNA to the A-site of ribosomes during protein biosynthesis. The protein is Elongation factor Tu, chloroplastic (tufA) of Gracilariopsis lemaneiformis (Red alga).